Reading from the N-terminus, the 369-residue chain is MAAKKNSKSQPATGDNRQKALDAALAMIEKDFGKGAVMRLGDDNRPPISAISSGNTAIDVALGIGGFPKGRIVEVYGPESSGKTTVALHAIAQAQRAGGIAAFIDAEHALDPDYARKLGVDTDALLVSQPDTGEQALEIADMLVRSGAIDIIVIDSVAALTPKAEIEGEMGDSHVGLQARLMSQALRKMTGALYNSGTTAIFINQLREKIGVMFGSPETTTGGKALKFYASVRCDVRRIQTLKDGQDAIGNRTRLKVVKNKVSPPFKIAEFDIMYGEGISRESSIIDLGVDNGIIKKSGSWFTYDGDQLGQGKEKVRLYLKQTPELADEIEEKIFRALQIGKYANQNDALTDDPVDMVPNIDFDDEDNG.

77–84 (GPESSGKT) is an ATP binding site.

The protein belongs to the RecA family.

The protein localises to the cytoplasm. Can catalyze the hydrolysis of ATP in the presence of single-stranded DNA, the ATP-dependent uptake of single-stranded DNA by duplex DNA, and the ATP-dependent hybridization of homologous single-stranded DNAs. It interacts with LexA causing its activation and leading to its autocatalytic cleavage. In Corynebacterium pseudotuberculosis (strain C231), this protein is Protein RecA.